Consider the following 173-residue polypeptide: ATP synthase subunit d, mitochondrial (173 aa).

The transit peptide at 1–23 directs the protein to the mitochondrion; it reads MAARSAALKIDWVKVTSSLGLRG.

It belongs to the ATPase d subunit family. As to quaternary structure, F-type ATPases have 2 components, CF(1) - the catalytic core - and CF(0) - the membrane proton channel. In yeast, the dimeric form of ATP synthase consists of 17 polypeptides: alpha, beta, gamma, delta, epsilon, 4 (B), 5 (OSCP), 6 (A), 8, 9 (C), d, E (Tim11), f, g, h, i/j and k.

It is found in the mitochondrion inner membrane. In terms of biological role, mitochondrial membrane ATP synthase (F(1)F(0) ATP synthase or Complex V) produces ATP from ADP in the presence of a proton gradient across the membrane which is generated by electron transport complexes of the respiratory chain. F-type ATPases consist of two structural domains, F(1) - containing the extramembraneous catalytic core, and F(0) - containing the membrane proton channel, linked together by a central stalk and a peripheral stalk. During catalysis, ATP synthesis in the catalytic domain of F(1) is coupled via a rotary mechanism of the central stalk subunits to proton translocation. Part of the complex F(0) domain and the peripheric stalk, which acts as a stator to hold the catalytic alpha(3)beta(3) subcomplex and subunit a/ATP6 static relative to the rotary elements. The chain is ATP synthase subunit d, mitochondrial (atp7) from Aspergillus terreus (strain NIH 2624 / FGSC A1156).